The sequence spans 148 residues: Putative anti-anti-sigma factor Rv2638 (148 aa).

In terms of domain architecture, STAS spans leucine 30–glycine 141.

Belongs to the anti-sigma-factor antagonist family. In terms of assembly, interacts with unphosphorylated OprA.

This Mycobacterium tuberculosis (strain ATCC 25618 / H37Rv) protein is Putative anti-anti-sigma factor Rv2638.